A 132-amino-acid chain; its full sequence is Acid shock protein (132 aa).

An N-terminal signal peptide occupies residues 1-21 (MKKVLALVVAAAMGLSSAAFA). Positions 20–45 (FAAETTTSSAAPATATATTTKAAPAK) are enriched in low complexity. Residues 20–132 (FAAETTTSSA…AAKPAAQPAA (113 aa)) form a disordered region. The propeptide occupies 22 to 90 (AETTTSSAAP…TTAPVEQKAQ (69 aa)). Positions 62-71 (AAKKHHKKAV) are enriched in basic residues. Composition is skewed to low complexity over residues 76 to 90 (AAPA…QKAQ) and 100 to 109 (AKPAVAQKAQ). Over residues 110 to 119 (AAKKHHKKAV) the composition is skewed to basic residues.

This sequence belongs to the Asr family. In terms of processing, proteolytic processing gives rise to the active protein.

The protein localises to the periplasm. Required for growth and/or survival at acidic conditions. In Enterobacter sp. (strain 638), this protein is Acid shock protein.